A 166-amino-acid polypeptide reads, in one-letter code: MSEQQAFRDAMSRLGAAVNIVTTDGPAGMAGFTASAVCSVTDSPPTLLVCLNRNASVWPVFQANGQLCVNTLAAGHEALSGLFGGKTPMEERFAAARWRRGVTGSPQLDGAVVSFDCRVEQVVPVSTHDVLLCRVLEITRNDDTHGLVWFDRHYHALSRPVCGLAS.

The protein belongs to the non-flavoprotein flavin reductase family. RutF subfamily.

The enzyme catalyses FMNH2 + NAD(+) = FMN + NADH + 2 H(+). In terms of biological role, catalyzes the reduction of FMN to FMNH2 which is used to reduce pyrimidine by RutA via the Rut pathway. The protein is FMN reductase (NADH) RutF of Cronobacter turicensis (strain DSM 18703 / CCUG 55852 / LMG 23827 / z3032).